A 422-amino-acid polypeptide reads, in one-letter code: Fasciclin-like arabinogalactan protein 10 (422 aa).

Residues 1–25 form the signal peptide; the sequence is MATSRAFTLFAFTLSLLTVASTVSG. FAS1 domains are found at residues 26-172 and 187-327; these read HNIT…NAPI and GVSN…DNVL. Residues asparagine 27, asparagine 128, asparagine 162, asparagine 190, and asparagine 244 are each glycosylated (N-linked (GlcNAc...) asparagine). The interval 336 to 397 is disordered; it reads SSSPAPAPEP…PTSSENSNAK (62 aa). Residues 340–374 are compositionally biased toward pro residues; that stretch reads APAPEPVSAPTPTPAKSPSPVEAPSPTAASPPAPP. Residues 386 to 397 show a composition bias toward polar residues; sequence DSPTSSENSNAK. Residue asparagine 398 is the site of GPI-anchor amidated asparagine attachment. The propeptide at 399-422 is removed in mature form; that stretch reads AAFHVNAPALFTALVTIAATSLLL.

It belongs to the fasciclin-like AGP family.

The protein localises to the cell membrane. May be a cell surface adhesion protein. This chain is Fasciclin-like arabinogalactan protein 10 (FLA10), found in Arabidopsis thaliana (Mouse-ear cress).